Reading from the N-terminus, the 628-residue chain is Kinesin-like protein subito (628 aa).

Positions 28-68 (RFRPRPNKKMRLFDNIQESEEESFSEYSDTESEYKYQSSEA) are disordered. The span at 44-58 (QESEEESFSEYSDTE) shows a compositional bias: acidic residues. One can recognise a Kinesin motor domain in the interval 87–479 (GPQVFLRLRP…LNFASIAKNI (393 aa)). An ATP-binding site is contributed by 169–176 (GTSGSGKT). The stretch at 509-612 (DYTKELEDEN…KNPASDTDIS (104 aa)) forms a coiled coil. Positions 596–628 (KDEIEELKNPASDTDISDDPNESKSPIEILDDD) are disordered. Position 607 is a phosphoserine (Ser-607). Thr-609 is modified (phosphothreonine). Ser-612 is modified (phosphoserine).

It belongs to the TRAFAC class myosin-kinesin ATPase superfamily. Kinesin family.

Its subcellular location is the cytoplasm. It localises to the cytoskeleton. Its function is as follows. Required during female meiosis for bipolar spindle formation in the absence of the centrosomes and chromosome homolog segregation. Also has roles in male meiosis and mitotic divisions of the early embryo. This chain is Kinesin-like protein subito (sub), found in Drosophila melanogaster (Fruit fly).